The sequence spans 253 residues: Triosephosphate isomerase (253 aa).

9–11 (NWK) contributes to the substrate binding site. Histidine 95 serves as the catalytic Electrophile. Glutamate 167 (proton acceptor) is an active-site residue. Residues glycine 173, serine 213, and 234–235 (GG) contribute to the substrate site. Phosphoserine is present on serine 213.

It belongs to the triosephosphate isomerase family. Homodimer.

It is found in the cytoplasm. It catalyses the reaction D-glyceraldehyde 3-phosphate = dihydroxyacetone phosphate. It participates in carbohydrate biosynthesis; gluconeogenesis. Its pathway is carbohydrate degradation; glycolysis; D-glyceraldehyde 3-phosphate from glycerone phosphate: step 1/1. Functionally, involved in the gluconeogenesis. Catalyzes stereospecifically the conversion of dihydroxyacetone phosphate (DHAP) to D-glyceraldehyde-3-phosphate (G3P). The sequence is that of Triosephosphate isomerase from Geobacillus kaustophilus (strain HTA426).